A 330-amino-acid polypeptide reads, in one-letter code: Glycerol-3-phosphate dehydrogenase [NAD(P)+] (330 aa).

NADPH contacts are provided by tryptophan 11, arginine 33, and lysine 105. The sn-glycerol 3-phosphate site is built by lysine 105, glycine 133, and serine 135. An NADPH-binding site is contributed by alanine 137. Residues lysine 188, aspartate 241, serine 251, arginine 252, and asparagine 253 each coordinate sn-glycerol 3-phosphate. Lysine 188 acts as the Proton acceptor in catalysis. Arginine 252 contributes to the NADPH binding site. Residues valine 276 and glutamate 278 each coordinate NADPH.

The protein belongs to the NAD-dependent glycerol-3-phosphate dehydrogenase family.

The protein resides in the cytoplasm. It carries out the reaction sn-glycerol 3-phosphate + NAD(+) = dihydroxyacetone phosphate + NADH + H(+). The catalysed reaction is sn-glycerol 3-phosphate + NADP(+) = dihydroxyacetone phosphate + NADPH + H(+). The protein operates within membrane lipid metabolism; glycerophospholipid metabolism. Functionally, catalyzes the reduction of the glycolytic intermediate dihydroxyacetone phosphate (DHAP) to sn-glycerol 3-phosphate (G3P), the key precursor for phospholipid synthesis. The sequence is that of Glycerol-3-phosphate dehydrogenase [NAD(P)+] from Acidovorax ebreus (strain TPSY) (Diaphorobacter sp. (strain TPSY)).